A 266-amino-acid polypeptide reads, in one-letter code: MQGSTRRMGVMTDVHRRFLQLLMTHGVLEEWDVKRLQTHCYKVHDRNATVDKLEDFINNINSVLESLYIEIKRGVTEDDGRPIYALVNLATTSISKMATDFAENELDLFRKALELIIDSETGFASSTNILNLVDQLKGKKMRKKEAEQVLQKFVQNKWLIEKEGEFTLHGRAILEMEQYIRETYPDAVKICNICHSLLIQGQSCETCGIRMHLPCVAKYFQSNAEPRCPHCNDYWPHEIPKVFDPEKERESGVLKSNKKSLRSRQH.

Positions M1–A102 are interaction with NSMCE3. The segment at C191 to N232 adopts an RING-type; atypical zinc-finger fold. The interval E246 to H266 is disordered. S251 is subject to Phosphoserine. Residues S256–H266 are compositionally biased toward basic residues.

Belongs to the NSE1 family. In terms of assembly, component of the SMC5-SMC6 complex which consists at least of SMC5, SMC6, NSMCE2, NSMCE1, NSMCE4A or EID3 and NSMCE3. NSMCE1, NSMCE4A or EID3 and NSMCE3 probably form a subcomplex that bridges the head domains of the SMC5-SMC6 heterodimer. Interacts with NSMCE3. Interacts with MAGEF1. Post-translationally, ubiquitinated.

It localises to the nucleus. The protein localises to the chromosome. The protein resides in the telomere. It catalyses the reaction S-ubiquitinyl-[E2 ubiquitin-conjugating enzyme]-L-cysteine + [acceptor protein]-L-lysine = [E2 ubiquitin-conjugating enzyme]-L-cysteine + N(6)-ubiquitinyl-[acceptor protein]-L-lysine.. RING-type zinc finger-containing E3 ubiquitin ligase that assembles with melanoma antigen protein (MAGE) to catalyze the direct transfer of ubiquitin from E2 ubiquitin-conjugating enzyme to a specific substrate. Within MAGE-RING ubiquitin ligase complex, MAGE stimulates and specifies ubiquitin ligase activity likely through recruitment and/or stabilization of the E2 ubiquitin-conjugating enzyme at the E3:substrate complex. Involved in maintenance of genome integrity, DNA damage response and DNA repair. NSMCE3/MAGEG1 and NSMCE1 ubiquitin ligase are components of SMC5-SMC6 complex and may positively regulate homologous recombination-mediated DNA repair. MAGEF1-NSMCE1 ubiquitin ligase promotes proteasomal degradation of MMS19, a key component of the cytosolic iron-sulfur protein assembly (CIA) machinery. Down-regulation of MMS19 impairs the activity of several DNA repair and metabolism enzymes such as ERCC2/XPD, FANCJ, RTEL1 and POLD1 that require iron-sulfur clusters as cofactors. The chain is Non-structural maintenance of chromosomes element 1 homolog from Homo sapiens (Human).